A 403-amino-acid polypeptide reads, in one-letter code: Alkaline protease 1 (403 aa).

The N-terminal stretch at 1 to 21 (MQSIKRTLLLLGAILPAVLGA) is a signal peptide. A propeptide spanning residues 22-125 (PVQETRRAAE…QIYYLDGLTT (104 aa)) is cleaved from the precursor. Residues 36–120 (KYIVTFKPGI…YVEEDQIYYL (85 aa)) enclose the Inhibitor I9 domain. The region spanning 130–403 (PWGLGSISHK…PNLLAYNGNA (274 aa)) is the Peptidase S8 domain. Catalysis depends on charge relay system residues Asp162 and His193. An N-linked (GlcNAc...) asparagine glycan is attached at Asn253. Ser349 functions as the Charge relay system in the catalytic mechanism.

The protein belongs to the peptidase S8 family.

The protein resides in the secreted. It carries out the reaction Hydrolysis of proteins with broad specificity, and of Bz-Arg-OEt &gt; Ac-Tyr-OEt. Does not hydrolyze peptide amides.. Secreted alkaline protease that allows assimilation of proteinaceous substrates. The protein is Alkaline protease 1 (alp1) of Aspergillus flavus (strain ATCC 200026 / FGSC A1120 / IAM 13836 / NRRL 3357 / JCM 12722 / SRRC 167).